Consider the following 255-residue polypeptide: 3-deoxy-manno-octulosonate cytidylyltransferase (255 aa).

Belongs to the KdsB family.

The protein localises to the cytoplasm. It catalyses the reaction 3-deoxy-alpha-D-manno-oct-2-ulosonate + CTP = CMP-3-deoxy-beta-D-manno-octulosonate + diphosphate. It participates in nucleotide-sugar biosynthesis; CMP-3-deoxy-D-manno-octulosonate biosynthesis; CMP-3-deoxy-D-manno-octulosonate from 3-deoxy-D-manno-octulosonate and CTP: step 1/1. The protein operates within bacterial outer membrane biogenesis; lipopolysaccharide biosynthesis. In terms of biological role, activates KDO (a required 8-carbon sugar) for incorporation into bacterial lipopolysaccharide in Gram-negative bacteria. The chain is 3-deoxy-manno-octulosonate cytidylyltransferase from Glaesserella parasuis serovar 5 (strain SH0165) (Haemophilus parasuis).